The primary structure comprises 185 residues: MINDILKDAENRMKKSLEVLADDLAKIRTGRAHPDLLAHVTIDYYGVETPITQAANITVLDARTLGITPWEKGLSSKIEKAILTSDLGLNPTNLGDSLRVPMPALNEERRKELVKLVKSETEAGRVSIRNIRRDANGDIKELLKEKEITEDQAKKAEDDIQKITDKMIAQADALAAKKEQDLMAV.

Belongs to the RRF family.

It localises to the cytoplasm. Functionally, responsible for the release of ribosomes from messenger RNA at the termination of protein biosynthesis. May increase the efficiency of translation by recycling ribosomes from one round of translation to another. The protein is Ribosome-recycling factor of Francisella tularensis subsp. holarctica (strain FTNF002-00 / FTA).